Here is a 135-residue protein sequence, read N- to C-terminus: Galectin-1 (135 aa).

Position 2 is an N-acetylalanine (alanine 2). Residues 4–135 (GLVASNLNLK…DFKIKCVAFE (132 aa)) enclose the Galectin domain. An N6-acetyllysine mark is found at lysine 13, lysine 19, and lysine 29. Position 30 is a phosphoserine (serine 30). Residues 45–49 (HFNPR), histidine 53, asparagine 62, and 69–72 (WGTE) each bind a beta-D-galactoside. Lysine 108 carries the post-translational modification N6-acetyllysine; alternate. Lysine 108 is modified (N6-succinyllysine; alternate). At lysine 128 the chain carries N6-acetyllysine.

In terms of assembly, homodimer. Binds LGALS3BP. Interacts with CD2, CD3, CD4, CD6, CD7, CD43, ALCAM and CD45. Interacts with laminin (via poly-N-acetyllactosamine). Interacts with SUSD2. Interacts with cargo receptor TMED10; the interaction mediates the translocation from the cytoplasm into the ERGIC (endoplasmic reticulum-Golgi intermediate compartment) and thereby secretion. Interacts with CD69.

It is found in the secreted. The protein localises to the extracellular space. The protein resides in the extracellular matrix. It localises to the cytoplasm. Functionally, lectin that binds beta-galactoside and a wide array of complex carbohydrates. Plays a role in regulating apoptosis, cell proliferation and cell differentiation. Inhibits CD45 protein phosphatase activity and therefore the dephosphorylation of Lyn kinase. Strong inducer of T-cell apoptosis. Plays a negative role in Th17 cell differentiation via activation of the receptor CD69. In Mus musculus (Mouse), this protein is Galectin-1 (Lgals1).